The primary structure comprises 601 residues: Secretogranin-2 (601 aa).

The N-terminal stretch at 1–30 is a signal peptide; it reads MSSQRNYCLAGCLSSCILVILMSFSDAASF. The disordered stretch occupies residues 89–109; it reads EQKDTQALSTDTAKSPTSDDE. A compositionally biased stretch (polar residues) spans 93–104; it reads TQALSTDTAKSP. Tyr151 carries the sulfotyrosine modification. Positions 258 to 273 are enriched in basic and acidic residues; sequence VESQTQEELKESKEEV. The segment at 258–307 is disordered; the sequence is VESQTQEELKESKEEVEKTDDMEDEIKRSGLLGLQDEEPEKDTKEQESEN.

This sequence belongs to the chromogranin/secretogranin protein family.

The protein resides in the secreted. Neuroendocrine protein of the granin family that regulates the biogenesis of secretory granules. This Pelophylax ridibundus (Marsh frog) protein is Secretogranin-2.